The following is a 106-amino-acid chain: MTASLTQQKIRIRLKAFDRRMLDLSCDKIIQTADTTAASAIGPIPLPTKRKIYCVLRSPHVDKDSREHFETRTHRRIIDIYSPSAKTIDALMKLDLPSGVDIEVKL.

Belongs to the universal ribosomal protein uS10 family. As to quaternary structure, part of the 30S ribosomal subunit.

Involved in the binding of tRNA to the ribosomes. The sequence is that of Small ribosomal subunit protein uS10 from Prochlorococcus marinus subsp. pastoris (strain CCMP1986 / NIES-2087 / MED4).